The chain runs to 353 residues: Photosystem II D2 protein (353 aa).

Thr2 carries the post-translational modification N-acetylthreonine. Thr2 bears the Phosphothreonine mark. The chain crosses the membrane as a helical span at residues 41–61; sequence CAYFALGGWLTGTTFVTSWYT. Chlorophyll a is bound at residue His118. Residues 125-141 traverse the membrane as a helical segment; sequence GFMLRQFEIARSVQLRP. Pheophytin a-binding residues include Gln130 and Asn143. A helical transmembrane segment spans residues 153–166; that stretch reads VFVSVFLIYPLGQS. His198 contacts chlorophyll a. Residues 208–228 form a helical membrane-spanning segment; it reads AALLCAIHGATVENTIFEDGD. 2 residues coordinate a plastoquinone: His215 and Phe262. His215 contacts Fe cation. His269 serves as a coordination point for Fe cation. The helical transmembrane segment at 279–295 threads the bilayer; sequence GLWMSAVGVVGLAVNLR.

This sequence belongs to the reaction center PufL/M/PsbA/D family. PSII is composed of 1 copy each of membrane proteins PsbA, PsbB, PsbC, PsbD, PsbE, PsbF, PsbH, PsbI, PsbJ, PsbK, PsbL, PsbM, PsbT, PsbX, PsbY, PsbZ, Psb30/Ycf12, at least 3 peripheral proteins of the oxygen-evolving complex and a large number of cofactors. It forms dimeric complexes. The D1/D2 heterodimer binds P680, chlorophylls that are the primary electron donor of PSII, and subsequent electron acceptors. It shares a non-heme iron and each subunit binds pheophytin, quinone, additional chlorophylls, carotenoids and lipids. There is also a Cl(-1) ion associated with D1 and D2, which is required for oxygen evolution. The PSII complex binds additional chlorophylls, carotenoids and specific lipids. serves as cofactor.

It is found in the plastid. Its subcellular location is the chloroplast thylakoid membrane. It carries out the reaction 2 a plastoquinone + 4 hnu + 2 H2O = 2 a plastoquinol + O2. Photosystem II (PSII) is a light-driven water:plastoquinone oxidoreductase that uses light energy to abstract electrons from H(2)O, generating O(2) and a proton gradient subsequently used for ATP formation. It consists of a core antenna complex that captures photons, and an electron transfer chain that converts photonic excitation into a charge separation. The D1/D2 (PsbA/PsbD) reaction center heterodimer binds P680, the primary electron donor of PSII as well as several subsequent electron acceptors. D2 is needed for assembly of a stable PSII complex. The protein is Photosystem II D2 protein of Chaetosphaeridium globosum (Charophycean green alga).